Here is a 648-residue protein sequence, read N- to C-terminus: Magnetosome protein MamZ (648 aa).

The interval methionine 1–isoleucine 431 is major facilitator domain. 18 consecutive transmembrane segments (helical) span residues isoleucine 28 to leucine 49, isoleucine 69 to leucine 87, valine 94 to leucine 113, leucine 119 to valine 143, leucine 163 to isoleucine 182, tyrosine 188 to phenylalanine 207, phenylalanine 252 to serine 273, alanine 285 to tryptophan 305, alanine 317 to phenylalanine 335, tryptophan 341 to leucine 361, isoleucine 373 to serine 395, alanine 407 to alanine 428, proline 449 to isoleucine 468, tyrosine 488 to valine 506, tyrosine 518 to valine 538, phenylalanine 558 to phenylalanine 574, alanine 595 to asparagine 612, and proline 618 to tyrosine 634. The ferric reductase-like domain, required for correct magnetite crystal formation stretch occupies residues lysine 444–leucine 645.

It in the N-terminal section; belongs to the major facilitator superfamily. As to quaternary structure, probably interacts with FtsZ-like and MamY proteins.

The protein localises to the magnetosome membrane. In terms of biological role, required for correct biomineralization of the magnetosome; probably converts and then transports some form of iron. It is partially functionally redundant with MamH. May function with MamX, MamY amd Mms6 in biomineralization. Despite its strong similarity to MsrQ (AC V6EX82) this protein does not genetically interact with bona fide MsrP (AC V6F0A4), which is encoded elsewhere in the genome. This chain is Magnetosome protein MamZ, found in Magnetospirillum gryphiswaldense (strain DSM 6361 / JCM 21280 / NBRC 15271 / MSR-1).